The primary structure comprises 502 residues: Type-2 serine--tRNA ligase (502 aa).

A304 provides a ligand contact to L-serine. Position 306 (C306) interacts with Zn(2+). Residue R336 participates in L-serine binding. ATP is bound by residues 336–338 and 347–348; these read RYE and RV. L-serine contacts are provided by residues 353–355 and Q400; that span reads RVE. E355 serves as a coordination point for Zn(2+). E432 is a binding site for ATP. N435 contributes to the L-serine binding site. C461 provides a ligand contact to Zn(2+). An ATP-binding site is contributed by R468.

This sequence belongs to the class-II aminoacyl-tRNA synthetase family. Type-2 seryl-tRNA synthetase subfamily. In terms of assembly, homodimer. Zn(2+) serves as cofactor.

Its subcellular location is the cytoplasm. The enzyme catalyses tRNA(Ser) + L-serine + ATP = L-seryl-tRNA(Ser) + AMP + diphosphate + H(+). It catalyses the reaction tRNA(Sec) + L-serine + ATP = L-seryl-tRNA(Sec) + AMP + diphosphate + H(+). It participates in aminoacyl-tRNA biosynthesis; selenocysteinyl-tRNA(Sec) biosynthesis; L-seryl-tRNA(Sec) from L-serine and tRNA(Sec): step 1/1. Catalyzes the attachment of serine to tRNA(Ser). Is also able to aminoacylate tRNA(Sec) with serine, to form the misacylated tRNA L-seryl-tRNA(Sec), which will be further converted into selenocysteinyl-tRNA(Sec). In Methanococcoides burtonii (strain DSM 6242 / NBRC 107633 / OCM 468 / ACE-M), this protein is Type-2 serine--tRNA ligase.